A 269-amino-acid polypeptide reads, in one-letter code: MKKIFAVLGDPIEHSLSPIMHNSAFEALDMDCTYHAFRVEKNDLENALQGAKAMGFGGLNLTVPLKETALKFVDADSLAAKIGAINTIDFKDGIKGYNTDGIGAKRTIEDEGVDIKDKNVLILGAGGAARAIAFTFAEAGANVNIANRTPERAMQLAAEIGDAKGYGLDIVDNGLEDIDILINTTTVGLGNSNGTLVTAEQMHSDLAVFDIVYNPLMTKLLQEAETAGARPITGIMMLVYQGAEAFRIWTGKEPPINVMKKTVMETLDI.

Residues 15-17 (SLS) and Thr62 contribute to the shikimate site. The active-site Proton acceptor is Lys66. Residues Asn86 and Asp100 each contribute to the shikimate site. NADP(+) is bound by residues 124-128 (GAGGA), 147-152 (NRTPER), and Ile211. Tyr213 contacts shikimate. Gly234 is an NADP(+) binding site.

Belongs to the shikimate dehydrogenase family. Homodimer.

It catalyses the reaction shikimate + NADP(+) = 3-dehydroshikimate + NADPH + H(+). The protein operates within metabolic intermediate biosynthesis; chorismate biosynthesis; chorismate from D-erythrose 4-phosphate and phosphoenolpyruvate: step 4/7. Functionally, involved in the biosynthesis of the chorismate, which leads to the biosynthesis of aromatic amino acids. Catalyzes the reversible NADPH linked reduction of 3-dehydroshikimate (DHSA) to yield shikimate (SA). The chain is Shikimate dehydrogenase (NADP(+)) from Methanococcoides burtonii (strain DSM 6242 / NBRC 107633 / OCM 468 / ACE-M).